A 138-amino-acid chain; its full sequence is Transcription antitermination protein NusB (138 aa).

Belongs to the NusB family.

Its function is as follows. Involved in transcription antitermination. Required for transcription of ribosomal RNA (rRNA) genes. Binds specifically to the boxA antiterminator sequence of the ribosomal RNA (rrn) operons. This is Transcription antitermination protein NusB from Coxiella burnetii (strain Dugway 5J108-111).